We begin with the raw amino-acid sequence, 322 residues long: Basic 30 kDa endochitinase (322 aa).

The signal sequence occupies residues 1-22 (MRLSEFTTLFLLFSVLLLSASA). Residues 23–64 (EQCGSQAGGALCASGLCCSKFGWCGNTNEYCGPGNCQSQCPG) form the Chitin-binding type-1 domain. Disulfide bonds link Cys-25-Cys-40, Cys-34-Cys-46, Cys-39-Cys-53, and Cys-58-Cys-62. 4-hydroxyproline is present on residues Pro-66 and Pro-68. 3 disulfides stabilise this stretch: Cys-93–Cys-156, Cys-168–Cys-176, and Cys-275–Cys-307. The active-site Proton donor is Glu-138. The propeptide at 316–322 (GLLVDIM) is removed in mature form.

Belongs to the glycosyl hydrolase 19 family. Chitinase class I subfamily. In terms of processing, the 4-hydroxyproline residues are not glycosylated in this plant vacuolar protein.

It is found in the vacuole. Its subcellular location is the secreted. The protein localises to the cell wall. The enzyme catalyses Random endo-hydrolysis of N-acetyl-beta-D-glucosaminide (1-&gt;4)-beta-linkages in chitin and chitodextrins.. Its function is as follows. Defense against chitin-containing fungal pathogens. The sequence is that of Basic 30 kDa endochitinase (CHI9) from Solanum lycopersicum (Tomato).